Reading from the N-terminus, the 121-residue chain is uncharacterized protein (121 aa).

The N-terminal stretch at 1 to 23 is a signal peptide; sequence MNFSTVFQAIIAVLGLTTVTALA. Residues N68 and N84 are each glycosylated (N-linked (GlcNAc...) asparagine).

In terms of processing, N-glycosylated.

This is an uncharacterized protein from Saccharomyces cerevisiae (strain ATCC 204508 / S288c) (Baker's yeast).